We begin with the raw amino-acid sequence, 311 residues long: Methionyl-tRNA formyltransferase (311 aa).

109–112 (SKLP) is a (6S)-5,6,7,8-tetrahydrofolate binding site.

It belongs to the Fmt family.

It catalyses the reaction L-methionyl-tRNA(fMet) + (6R)-10-formyltetrahydrofolate = N-formyl-L-methionyl-tRNA(fMet) + (6S)-5,6,7,8-tetrahydrofolate + H(+). Its function is as follows. Attaches a formyl group to the free amino group of methionyl-tRNA(fMet). The formyl group appears to play a dual role in the initiator identity of N-formylmethionyl-tRNA by promoting its recognition by IF2 and preventing the misappropriation of this tRNA by the elongation apparatus. The chain is Methionyl-tRNA formyltransferase (fmt) from Mycoplasma genitalium (strain ATCC 33530 / DSM 19775 / NCTC 10195 / G37) (Mycoplasmoides genitalium).